The chain runs to 388 residues: Probable serine/threonine-protein kinase PBL20 (388 aa).

Residue Cys-3 is the site of S-palmitoyl cysteine attachment. A Protein kinase domain is found at 91–372; the sequence is FSRKLKIGEG…FVVESLTNII (282 aa). ATP contacts are provided by residues 97–105 and Lys-128; that span reads IGEGGFGSV. The active-site Proton acceptor is Asp-221.

Belongs to the protein kinase superfamily. Ser/Thr protein kinase family.

It localises to the cell membrane. It carries out the reaction L-seryl-[protein] + ATP = O-phospho-L-seryl-[protein] + ADP + H(+). The catalysed reaction is L-threonyl-[protein] + ATP = O-phospho-L-threonyl-[protein] + ADP + H(+). May be involved in plant defense signaling. The polypeptide is Probable serine/threonine-protein kinase PBL20 (Arabidopsis thaliana (Mouse-ear cress)).